Reading from the N-terminus, the 108-residue chain is Cyclin-dependent protein kinase inhibitor SMR13 (108 aa).

Its function is as follows. Probable cyclin-dependent protein kinase (CDK) inhibitor that functions as a repressor of mitosis in the endoreduplication cell cycle. The polypeptide is Cyclin-dependent protein kinase inhibitor SMR13 (Arabidopsis thaliana (Mouse-ear cress)).